A 370-amino-acid chain; its full sequence is Protein DVU_0535 (370 aa).

The Cytoplasmic portion of the chain corresponds to 1-258 (MDRRRFLTLL…EELGTKSAPE (258 aa)). 3 consecutive 4Fe-4S ferredoxin-type domains span residues 40 to 70 (YGVL…APKA), 101 to 132 (DHPV…KNPD), and 133 to 162 (GSVT…FQYA). [4Fe-4S] cluster-binding residues include Cys-49, Cys-52, Cys-55, Cys-59, Cys-110, Cys-113, Cys-118, Cys-122, Cys-142, Cys-145, Cys-148, Cys-152, Cys-172, Cys-175, Cys-187, and Cys-191. The helical transmembrane segment at 259–284 (YTAGALGAVPMVVGIWPILLTGAYAI) threads the bilayer. The Periplasmic portion of the chain corresponds to 285-370 (TKRKEKIAAE…DDAGKPGEDA (86 aa)). Residues 345–355 (FEEELAAKEQP) are compositionally biased toward basic and acidic residues. The interval 345-370 (FEEELAAKEQPEAPEGDDAGKPGEDA) is disordered.

It localises to the cell membrane. Its function is as follows. HMWC (high-molecular-weight cytochrome c precursor), ORF2, ORF3, ORF4, ORF5, ORF6 in the HMC operon form a transmembrane protein complex that allows electron flow from the periplasmic hydrogenase to the cytoplasmic enzymes that catalyze reduction of sulfates. ORF2 is a transmembrane redox protein. The sequence is that of Protein DVU_0535 from Nitratidesulfovibrio vulgaris (strain ATCC 29579 / DSM 644 / CCUG 34227 / NCIMB 8303 / VKM B-1760 / Hildenborough) (Desulfovibrio vulgaris).